We begin with the raw amino-acid sequence, 540 residues long: Glucose-6-phosphate isomerase (540 aa).

The active-site Proton donor is E350. Active-site residues include H381 and K503.

Belongs to the GPI family.

It localises to the cytoplasm. The enzyme catalyses alpha-D-glucose 6-phosphate = beta-D-fructose 6-phosphate. It participates in carbohydrate biosynthesis; gluconeogenesis. Its pathway is carbohydrate degradation; glycolysis; D-glyceraldehyde 3-phosphate and glycerone phosphate from D-glucose: step 2/4. Catalyzes the reversible isomerization of glucose-6-phosphate to fructose-6-phosphate. The sequence is that of Glucose-6-phosphate isomerase from Burkholderia mallei (strain NCTC 10247).